The chain runs to 1414 residues: DNA-directed RNA polymerase subunit beta' (1414 aa).

Residues Cys-72, Cys-74, Cys-87, and Cys-90 each coordinate Zn(2+). Mg(2+) contacts are provided by Asp-463, Asp-465, and Asp-467. Zn(2+)-binding residues include Cys-811, Cys-885, Cys-892, and Cys-895.

It belongs to the RNA polymerase beta' chain family. The RNAP catalytic core consists of 2 alpha, 1 beta, 1 beta' and 1 omega subunit. When a sigma factor is associated with the core the holoenzyme is formed, which can initiate transcription. Requires Mg(2+) as cofactor. It depends on Zn(2+) as a cofactor.

The enzyme catalyses RNA(n) + a ribonucleoside 5'-triphosphate = RNA(n+1) + diphosphate. Its function is as follows. DNA-dependent RNA polymerase catalyzes the transcription of DNA into RNA using the four ribonucleoside triphosphates as substrates. The sequence is that of DNA-directed RNA polymerase subunit beta' from Roseobacter denitrificans (strain ATCC 33942 / OCh 114) (Erythrobacter sp. (strain OCh 114)).